The sequence spans 383 residues: Protein COS5 (383 aa).

Residues 1 to 42 lie on the Cytoplasmic side of the membrane; the sequence is MKENELKNEKSVDVLSFKQLESQKIVLPQDLFRSSFTWFCYE. A helical transmembrane segment spans residues 43-63; that stretch reads IYKSLAFPIWMLLWLPLSVWW. The Extracellular segment spans residues 64–72; it reads KLSNNCIYP. Residues 73 to 93 traverse the membrane as a helical segment; the sequence is LIVSLLVLFLGPIFVLVICGL. Residues 94–232 are Cytoplasmic-facing; that stretch reads SRKRSLSKQL…RSKLTWFLKR (139 aa). A helical transmembrane segment spans residues 233–253; sequence IFTIYSLPLWLAFLNCICVSQ. Position 254 (His254) is a topological domain, extracellular. The chain crosses the membrane as a helical span at residues 255-275; it reads FCLAFRILCPGLFFLMMVWLF. At 276-383 the chain is on the cytoplasmic side; sequence QNMRTTALLV…SRNEESLMKK (108 aa).

It belongs to the DUP/COS family.

The protein resides in the membrane. The protein is Protein COS5 (COS5) of Saccharomyces cerevisiae (strain ATCC 204508 / S288c) (Baker's yeast).